The sequence spans 427 residues: Probable threonylcarbamoyladenosine tRNA methylthiotransferase (427 aa).

Positions 12-118 constitute an MTTase N-terminal domain; sequence MRVYVEGYGC…AGEILKNYVE (107 aa). Residues C21, C57, C86, C155, C159, and C162 each contribute to the [4Fe-4S] cluster site. The 230-residue stretch at 141 to 370 folds into the Radical SAM core domain; that stretch reads LKPSLITPLP…DKLRRELSYL (230 aa). In terms of domain architecture, TRAM spans 373–427; sequence KKYIGKAMKVLVLDEGKGYTDNFKVVKFEGGEVGEFRKVKITDAKTFGLKGELIL.

It belongs to the methylthiotransferase family. CDKAL1 subfamily. It depends on [4Fe-4S] cluster as a cofactor.

It catalyses the reaction N(6)-L-threonylcarbamoyladenosine(37) in tRNA + (sulfur carrier)-SH + AH2 + 2 S-adenosyl-L-methionine = 2-methylsulfanyl-N(6)-L-threonylcarbamoyladenosine(37) in tRNA + (sulfur carrier)-H + 5'-deoxyadenosine + L-methionine + A + S-adenosyl-L-homocysteine + 2 H(+). Functionally, catalyzes the methylthiolation of N6-threonylcarbamoyladenosine (t(6)A), leading to the formation of 2-methylthio-N6-threonylcarbamoyladenosine (ms(2)t(6)A) at position 37 in tRNAs that read codons beginning with adenine. This is Probable threonylcarbamoyladenosine tRNA methylthiotransferase from Methanocaldococcus jannaschii (strain ATCC 43067 / DSM 2661 / JAL-1 / JCM 10045 / NBRC 100440) (Methanococcus jannaschii).